A 148-amino-acid polypeptide reads, in one-letter code: Ubiquitin-conjugating enzyme E2 5B (148 aa).

In terms of domain architecture, UBC core spans 1–147 (MASKRILKEL…ARSWTQKYAM (147 aa)). Cys85 (glycyl thioester intermediate) is an active-site residue.

This sequence belongs to the ubiquitin-conjugating enzyme family.

It catalyses the reaction S-ubiquitinyl-[E1 ubiquitin-activating enzyme]-L-cysteine + [E2 ubiquitin-conjugating enzyme]-L-cysteine = [E1 ubiquitin-activating enzyme]-L-cysteine + S-ubiquitinyl-[E2 ubiquitin-conjugating enzyme]-L-cysteine.. It functions in the pathway protein modification; protein ubiquitination. E2 conjugating enzyme that associates with the E3 ubiquitin-protein ligase EL5 to mediate ubiquitination of target proteins. The sequence is that of Ubiquitin-conjugating enzyme E2 5B (UBC5B) from Oryza sativa subsp. japonica (Rice).